The sequence spans 430 residues: MMRDVFRPTKSAPCSPAKPLGISRTQSESFHAIHKVPVGDSPYVRAKNVQLVEKDPERAIPLFWKAINAGDRVDSALKDMAIVMKQQNRAEEAIEAIKSLRVRCSDQAQESLDNILLDLYKRCGRLDDQIGLLKHKLFLIQKGLAFNGKRTKTARSQGKKFQVSVEQEATRLLGNLGWALMQRDNFVEAEDAYRRALSIAPDNNKMCNLGICLMKQGRIDEAKETLRRVKPAVVDGPRGVDSHLKAYERAQQMLNDLGSEMMRRGGDDKVEQRRLFDAIFGSSSIWQPQPCSEQTVKAKPKPGLSNGDGYGDENVKMSVNPVVVNPLRVDAKPFFSSKLVISNNEKLKRTRSSSQGMGMLSGIGGDHEGETNTSTRRRLSMEKKATECGLPDNKDFEDAIMAAVLGTETKVDKKRLKVFQDITLCLNQSL.

Residues 1 to 21 form a disordered region; sequence MMRDVFRPTKSAPCSPAKPLG. TPR repeat units lie at residues 40-73, 74-107, 110-143, 170-203, 205-236, and 238-257; these read DSPY…GDRV, DSAL…CSDQ, ESLD…IQKG, TRLL…APDN, KMCN…VVDG, and RGVD…LNDL. Positions 81 to 107 form a coiled coil; that stretch reads AIVMKQQNRAEEAIEAIKSLRVRCSDQ. The interval 346–376 is disordered; the sequence is KLKRTRSSSQGMGMLSGIGGDHEGETNTSTR.

It belongs to the MS5 protein family.

The protein localises to the nucleus. Functionally, probably involved in the regulation of cell division. The chain is Protein POLLENLESS 3-LIKE 2 from Arabidopsis thaliana (Mouse-ear cress).